The following is a 932-amino-acid chain: DNA mismatch repair protein MutS (932 aa).

ATP is bound at residue 615–622 (GPNMAGKS).

This sequence belongs to the DNA mismatch repair MutS family.

This protein is involved in the repair of mismatches in DNA. It is possible that it carries out the mismatch recognition step. This protein has a weak ATPase activity. This is DNA mismatch repair protein MutS from Clostridium botulinum (strain 657 / Type Ba4).